A 102-amino-acid chain; its full sequence is Small ribosomal subunit protein uS10 (102 aa).

It belongs to the universal ribosomal protein uS10 family. In terms of assembly, part of the 30S ribosomal subunit.

In terms of biological role, involved in the binding of tRNA to the ribosomes. This is Small ribosomal subunit protein uS10 from Methanococcus maripaludis (strain C7 / ATCC BAA-1331).